A 325-amino-acid polypeptide reads, in one-letter code: Capsid protein (325 aa).

The segment at 30–89 (DLRTNPPPTEPPSRKSKLMSTSENKGKQPLHPPPTEGFPKPPPPPSSTPTTPTPPDQTKA) is disordered. Positions 59–84 (LHPPPTEGFPKPPPPPSSTPTTPTPP) are enriched in pro residues.

Belongs to the potexviruses coat protein family.

The protein localises to the virion. Required for genome encapsidation. Forms ribonucleoprotein complexes along with TGB1 helicase and viral RNA. This chain is Capsid protein, found in Citrus (ICRSV).